The sequence spans 328 residues: Dolichyl-diphosphooligosaccharide--protein glycosyltransferase subunit MAGT1 (328 aa).

Positions 1–22 (MLHKLLIVVFLVVCLHDMRLNG) are cleaved as a signal peptide. At 23 to 177 (QKKKETLLSE…DVHIRVIRPP (155 aa)) the chain is on the extracellular side. In terms of domain architecture, Thioredoxin spans 40 to 168 (WVSKRAVVRL…LARWVADRTD (129 aa)). The N-linked (GlcNAc...) asparagine glycan is linked to Asn-64. Residues Cys-80 and Cys-83 are joined by a disulfide bond. A helical membrane pass occupies residues 178 to 198 (NYAGPLMLGLLLAFIGSLAYL). Topologically, residues 199–202 (RRNN) are cytoplasmic. A helical transmembrane segment spans residues 203–223 (LEFLFNKNVWAFSALCFVLIM). At 224 to 257 (TSGQMWNHIRGPPYAHKNPNTGQVSYIHGSSQAQ) the chain is on the extracellular side. Residues 258-278 (FVAETHIVLLFNAAVTIGMVL) traverse the membrane as a helical segment. Residues 279–293 (LHEAATSGLDIVKRK) are Cytoplasmic-facing. Residues 294–314 (IMCVAGIGLVVLFFSWLLSVF) traverse the membrane as a helical segment. Residues 315–328 (RAKYHGYPYSFLFG) are Extracellular-facing.

It belongs to the OST3/OST6 family. Accessory component of the STT3B-containing form of the oligosaccharyltransferase (OST) complex.

It localises to the cell membrane. Its subcellular location is the endoplasmic reticulum. It is found in the endoplasmic reticulum membrane. The protein operates within protein modification; protein glycosylation. Its function is as follows. Accessory component of the STT3B-containing form of the N-oligosaccharyl transferase (OST) complex which catalyzes the transfer of a high mannose oligosaccharide from a lipid-linked oligosaccharide donor to an asparagine residue within an Asn-X-Ser/Thr consensus motif in nascent polypeptide chains. Involved in N-glycosylation of STT3B-dependent substrates. Specifically required for the glycosylation of a subset of acceptor sites that are near cysteine residues; in this function seems to act redundantly with TUSC3. In its oxidized form proposed to form transient mixed disulfides with a glycoprotein substrate to facilitate access of STT3B to the unmodified acceptor site. Also has oxidoreductase-independent functions in the STT3B-containing OST complex possibly involving substrate recognition. Could indirectly play a role in Mg(2+) transport. The sequence is that of Dolichyl-diphosphooligosaccharide--protein glycosyltransferase subunit MAGT1 from Danio rerio (Zebrafish).